A 503-amino-acid polypeptide reads, in one-letter code: Cobyric acid synthase (503 aa).

The GATase cobBQ-type domain occupies 260–453 (KIGVAAIYFP…FHALFDESSV (194 aa)). Residue Cys341 is the Nucleophile of the active site. Residue His445 is part of the active site.

The protein belongs to the CobB/CobQ family. CobQ subfamily.

It functions in the pathway cofactor biosynthesis; adenosylcobalamin biosynthesis. Catalyzes amidations at positions B, D, E, and G on adenosylcobyrinic A,C-diamide. NH(2) groups are provided by glutamine, and one molecule of ATP is hydrogenolyzed for each amidation. This Pelodictyon phaeoclathratiforme (strain DSM 5477 / BU-1) protein is Cobyric acid synthase.